We begin with the raw amino-acid sequence, 185 residues long: Elongation factor P (185 aa).

This sequence belongs to the elongation factor P family.

Its subcellular location is the cytoplasm. Its pathway is protein biosynthesis; polypeptide chain elongation. Its function is as follows. Involved in peptide bond synthesis. Stimulates efficient translation and peptide-bond synthesis on native or reconstituted 70S ribosomes in vitro. Probably functions indirectly by altering the affinity of the ribosome for aminoacyl-tRNA, thus increasing their reactivity as acceptors for peptidyl transferase. This chain is Elongation factor P, found in Halalkalibacterium halodurans (strain ATCC BAA-125 / DSM 18197 / FERM 7344 / JCM 9153 / C-125) (Bacillus halodurans).